Reading from the N-terminus, the 122-residue chain is Small ribosomal subunit protein uS13 (122 aa).

The segment at 93–122 (RKGLPVRGQTTKNNARTRKGKRKTVGSASK) is disordered. Residues 107 to 116 (ARTRKGKRKT) show a composition bias toward basic residues.

Belongs to the universal ribosomal protein uS13 family. In terms of assembly, part of the 30S ribosomal subunit. Forms a loose heterodimer with protein S19. Forms two bridges to the 50S subunit in the 70S ribosome.

In terms of biological role, located at the top of the head of the 30S subunit, it contacts several helices of the 16S rRNA. In the 70S ribosome it contacts the 23S rRNA (bridge B1a) and protein L5 of the 50S subunit (bridge B1b), connecting the 2 subunits; these bridges are implicated in subunit movement. Contacts the tRNAs in the A and P-sites. The polypeptide is Small ribosomal subunit protein uS13 (Wolinella succinogenes (strain ATCC 29543 / DSM 1740 / CCUG 13145 / JCM 31913 / LMG 7466 / NCTC 11488 / FDC 602W) (Vibrio succinogenes)).